Reading from the N-terminus, the 1508-residue chain is Gem-associated protein 5 (1508 aa).

The interval 1–124 is important for interaction with U1 snRNA; it reads MGQEPRTLPP…LHWSPRVKDL (124 aa). Residues 13 to 15 form an interaction with U4 snRNA region; sequence NWY. Ser48 bears the Phosphoserine mark. Position 51 is a phosphothreonine (Thr51). WD repeat units follow at residues 62–104, 107–148, 150–189, 193–264, 280–321, 333–374, 377–417, 424–464, 468–509, 533–573, and 576–622; these read GHTE…VVTE, LHQH…QHLF, EPRT…EVIH, GHDD…GVMI, TVKE…RRKY, HSRI…CSWT, SLGG…NNYD, GVKS…PPQI, YHKK…IVLQ, KYKL…LICT, and QHHK…ESSP. The residue at position 624 (Ser624) is a Phosphoserine. 2 WD repeats span residues 637–677 and 680–720; these read GHTA…PLCN and GHRG…HSRP. Residues 715–790 form a disordered region; that stretch reads QDHSRPPQGK…EGEEQAREPE (76 aa). Residues 739–748 are compositionally biased toward basic residues; that stretch reads AKPKKKKKPT. Thr751 is subject to Phosphothreonine. Lys754 is covalently cross-linked (Glycyl lysine isopeptide (Lys-Gly) (interchain with G-Cter in SUMO2)). Ser757, Ser770, Ser778, and Ser847 each carry phosphoserine. Disordered stretches follow at residues 1313–1343 and 1389–1428; these read EPSQ…ELDL and QKSQ…KNEP. The stretch at 1362-1393 forms a coiled coil; sequence EKHASLQNSQRTVAEVQETLAEMIRQHQKSQL. The span at 1390 to 1399 shows a compositional bias: polar residues; it reads KSQLCKSTAN.

Belongs to the WD repeat gemin-5 family. Part of the core SMN complex that contains SMN1, GEMIN2/SIP1, DDX20/GEMIN3, GEMIN4, GEMIN5, GEMIN6, GEMIN7, GEMIN8 and STRAP/UNRIP. Part of the SMN-Sm complex that contains SMN1, GEMIN2/SIP1, DDX20/GEMIN3, GEMIN4, GEMIN5, GEMIN6, GEMIN7, GEMIN8, STRAP/UNRIP and the Sm proteins SNRPB, SNRPD1, SNRPD2, SNRPD3, SNRPE, SNRPF and SNRPG. Interacts with GEMIN2; the interaction is direct. Interacts with SMN1, SNRPB, SNRPD1, SNRPD2, SNRPD3 and SNRPE; the interaction is direct. Interacts with cytosolic DDX20/GEMIN3 and GEMIN4. Interacts with SNRNP70 and HNRNPU. Identified in a complex with 80S ribosomes; binds to the 60S large ribosomal subunit. Interacts with the ribosomal subunits RPL3 and RPL4.

Its subcellular location is the nucleus. The protein resides in the nucleoplasm. The protein localises to the gem. It localises to the cytoplasm. In terms of biological role, the SMN complex catalyzes the assembly of small nuclear ribonucleoproteins (snRNPs), the building blocks of the spliceosome, and thereby plays an important role in the splicing of cellular pre-mRNAs. Most spliceosomal snRNPs contain a common set of Sm proteins SNRPB, SNRPD1, SNRPD2, SNRPD3, SNRPE, SNRPF and SNRPG that assemble in a heptameric protein ring on the Sm site of the small nuclear RNA to form the core snRNP (Sm core). In the cytosol, the Sm proteins SNRPD1, SNRPD2, SNRPE, SNRPF and SNRPG are trapped in an inactive 6S pICln-Sm complex by the chaperone CLNS1A that controls the assembly of the core snRNP. To assemble core snRNPs, the SMN complex accepts the trapped 5Sm proteins from CLNS1A forming an intermediate. Binding of snRNA inside 5Sm ultimately triggers eviction of the SMN complex, thereby allowing binding of SNRPD3 and SNRPB to complete assembly of the core snRNP. Within the SMN complex, GEMIN5 recognizes and delivers the small nuclear RNAs (snRNAs) to the SMN complex. Binds to the 7-methylguanosine cap of RNA molecules. Binds to the 3'-UTR of SMN1 mRNA and regulates its translation; does not affect mRNA stability. May play a role in the regulation of protein synthesis via its interaction with ribosomes. This chain is Gem-associated protein 5 (GEMIN5), found in Homo sapiens (Human).